The sequence spans 619 residues: Genetic interactor of prohibitins 3, mitochondrial (619 aa).

The transit peptide at 1 to 55 (MLKAQIQTGLQLLQRAAVSHMRPSSCTSMLMRMRVHLAPRALQSQRSLSSSEFSP) directs the protein to the mitochondrion. The 211-residue stretch at 162–372 (VAAVSDVMHS…IYDVPGFSSA (211 aa)) folds into the CP-type G domain.

The protein belongs to the TRAFAC class YlqF/YawG GTPase family. GEP3 subfamily.

It is found in the mitochondrion. In terms of biological role, may be involved in the mitochondrial lipid metabolism. This chain is Genetic interactor of prohibitins 3, mitochondrial (GEP3), found in Clavispora lusitaniae (strain ATCC 42720) (Yeast).